The primary structure comprises 304 residues: N-acetyl-D-glucosamine kinase (304 aa).

ATP is bound by residues 4–11 (GFDMGGTK) and 133–140 (GVGGGLIV). Zn(2+) is bound by residues H157, C177, C179, and C184.

The protein belongs to the ROK (NagC/XylR) family. NagK subfamily.

The catalysed reaction is N-acetyl-D-glucosamine + ATP = N-acetyl-D-glucosamine 6-phosphate + ADP + H(+). It participates in cell wall biogenesis; peptidoglycan recycling. Catalyzes the phosphorylation of N-acetyl-D-glucosamine (GlcNAc) derived from cell-wall degradation, yielding GlcNAc-6-P. The polypeptide is N-acetyl-D-glucosamine kinase (Yersinia pseudotuberculosis serotype IB (strain PB1/+)).